Consider the following 321-residue polypeptide: Probable pectate lyase A (321 aa).

A signal peptide spans 1-18 (MKFVATLIACGLSGLALA). An N-linked (GlcNAc...) asparagine glycan is attached at Asn93. Ca(2+)-binding residues include Asp134, Asp163, and Asp167. The active site involves Arg220. A glycan (N-linked (GlcNAc...) asparagine) is linked at Asn238.

It belongs to the polysaccharide lyase 1 family. Ca(2+) serves as cofactor.

The protein resides in the secreted. The catalysed reaction is Eliminative cleavage of (1-&gt;4)-alpha-D-galacturonan to give oligosaccharides with 4-deoxy-alpha-D-galact-4-enuronosyl groups at their non-reducing ends.. Functionally, pectinolytic enzyme consist of four classes of enzymes: pectin lyase, polygalacturonase, pectin methylesterase and rhamnogalacturonase. Among pectinolytic enzymes, pectin lyase is the most important in depolymerization of pectin, since it cleaves internal glycosidic bonds of highly methylated pectins. Favors pectate, the anion, over pectin, the methyl ester. This is Probable pectate lyase A (plyA) from Neosartorya fischeri (strain ATCC 1020 / DSM 3700 / CBS 544.65 / FGSC A1164 / JCM 1740 / NRRL 181 / WB 181) (Aspergillus fischerianus).